The chain runs to 398 residues: Nicotinate phosphoribosyltransferase (398 aa).

His214 carries the phosphohistidine; by autocatalysis modification.

Belongs to the NAPRTase family. Transiently phosphorylated on a His residue during the reaction cycle. Phosphorylation strongly increases the affinity for substrates and increases the rate of nicotinate D-ribonucleotide production. Dephosphorylation regenerates the low-affinity form of the enzyme, leading to product release.

It catalyses the reaction nicotinate + 5-phospho-alpha-D-ribose 1-diphosphate + ATP + H2O = nicotinate beta-D-ribonucleotide + ADP + phosphate + diphosphate. Its pathway is cofactor biosynthesis; NAD(+) biosynthesis; nicotinate D-ribonucleotide from nicotinate: step 1/1. Its function is as follows. Catalyzes the synthesis of beta-nicotinate D-ribonucleotide from nicotinate and 5-phospho-D-ribose 1-phosphate at the expense of ATP. In Xanthomonas campestris pv. campestris (strain 8004), this protein is Nicotinate phosphoribosyltransferase.